Reading from the N-terminus, the 189-residue chain is MFWLLALLAYLLGSLSFAIVLSRLSGSPDPRSSGSGNAGATNMLRLAGRKLAILTLLGDLCKGLLPVLLARAAGLDLHAQAWVGICAVLGHLFPLYFRFKGGKGVATAAGMLMALYFPAALLAIGAWLLTFYLTRTSSLAALIATPLTLPLLAWREPEALLPISVLTVMIVWRHRNNLRDLFAGRERHF.

The next 5 helical transmembrane spans lie at 1-21 (MFWL…AIVL), 50-70 (KLAI…VLLA), 77-97 (LHAQ…PLYF), 111-131 (MLMA…LLTF), and 151-171 (LLAW…VMIV).

The protein belongs to the PlsY family. As to quaternary structure, probably interacts with PlsX.

It is found in the cell inner membrane. It carries out the reaction an acyl phosphate + sn-glycerol 3-phosphate = a 1-acyl-sn-glycero-3-phosphate + phosphate. It functions in the pathway lipid metabolism; phospholipid metabolism. Its function is as follows. Catalyzes the transfer of an acyl group from acyl-phosphate (acyl-PO(4)) to glycerol-3-phosphate (G3P) to form lysophosphatidic acid (LPA). This enzyme utilizes acyl-phosphate as fatty acyl donor, but not acyl-CoA or acyl-ACP. The sequence is that of Glycerol-3-phosphate acyltransferase from Pseudomonas putida (strain ATCC 47054 / DSM 6125 / CFBP 8728 / NCIMB 11950 / KT2440).